A 170-amino-acid polypeptide reads, in one-letter code: Lipoprotein signal peptidase (170 aa).

The next 3 helical transmembrane spans lie at 13–33, 72–92, and 96–113; these read IFIS…VKYI, LFFL…ALKE, and IARI…GNII. Active-site residues include Asp-124 and Asp-146. A helical transmembrane segment spans residues 142 to 162; the sequence is FNFADSYVVIGITLFIIYDLF.

This sequence belongs to the peptidase A8 family.

Its subcellular location is the cell inner membrane. The enzyme catalyses Release of signal peptides from bacterial membrane prolipoproteins. Hydrolyzes -Xaa-Yaa-Zaa-|-(S,diacylglyceryl)Cys-, in which Xaa is hydrophobic (preferably Leu), and Yaa (Ala or Ser) and Zaa (Gly or Ala) have small, neutral side chains.. Its pathway is protein modification; lipoprotein biosynthesis (signal peptide cleavage). Functionally, this protein specifically catalyzes the removal of signal peptides from prolipoproteins. This Borrelia turicatae (strain 91E135) protein is Lipoprotein signal peptidase.